Here is a 508-residue protein sequence, read N- to C-terminus: Photosystem II CP47 reaction center protein (508 aa).

Helical transmembrane passes span alanine 21–serine 36, isoleucine 101–tryptophan 115, glycine 140–phenylalanine 156, isoleucine 203–serine 218, valine 237–valine 252, and threonine 457–arginine 472.

Belongs to the PsbB/PsbC family. PsbB subfamily. As to quaternary structure, PSII is composed of 1 copy each of membrane proteins PsbA, PsbB, PsbC, PsbD, PsbE, PsbF, PsbH, PsbI, PsbJ, PsbK, PsbL, PsbM, PsbT, PsbX, PsbY, PsbZ, Psb30/Ycf12, at least 3 peripheral proteins of the oxygen-evolving complex and a large number of cofactors. It forms dimeric complexes. Binds multiple chlorophylls. PSII binds additional chlorophylls, carotenoids and specific lipids. is required as a cofactor.

Its subcellular location is the plastid. It is found in the chloroplast thylakoid membrane. Its function is as follows. One of the components of the core complex of photosystem II (PSII). It binds chlorophyll and helps catalyze the primary light-induced photochemical processes of PSII. PSII is a light-driven water:plastoquinone oxidoreductase, using light energy to abstract electrons from H(2)O, generating O(2) and a proton gradient subsequently used for ATP formation. In Gnetum parvifolium (Small-leaved jointfir), this protein is Photosystem II CP47 reaction center protein.